The primary structure comprises 344 residues: Lipase chaperone (344 aa).

Residues 14 to 34 form a helical membrane-spanning segment; the sequence is VAVYGAVGLAAIAGVAIWSGA.

Belongs to the lipase chaperone family.

It is found in the cell inner membrane. Functionally, may be involved in the folding of the extracellular lipase during its passage through the periplasm. The polypeptide is Lipase chaperone (Burkholderia ambifaria (strain MC40-6)).